Here is a 372-residue protein sequence, read N- to C-terminus: Alanine dehydrogenase 1 (372 aa).

The active site involves His-94. Thr-170–Asn-200 provides a ligand contact to NAD(+).

It belongs to the AlaDH/PNT family.

It carries out the reaction L-alanine + NAD(+) + H2O = pyruvate + NH4(+) + NADH + H(+). The protein operates within amino-acid degradation; L-alanine degradation via dehydrogenase pathway; NH(3) and pyruvate from L-alanine: step 1/1. In terms of biological role, may play a role in cell wall synthesis as L-alanine is an important constituent of the peptidoglycan layer. This is Alanine dehydrogenase 1 (ald1) from Staphylococcus aureus (strain bovine RF122 / ET3-1).